The primary structure comprises 321 residues: Methyltransferase cfoB (321 aa).

Belongs to the methyltransferase superfamily.

It participates in secondary metabolite biosynthesis; flavonoid biosynthesis. In terms of biological role, methyltransferase; part of the gene cluster that mediates the biosynthesis of chlorflavonin, a fungal flavonoid with acetolactate synthase inhibitory activity. Within the pathway, cfoB is responsible for the methylation at position C7-OH of flavonoid. The pathway begins with the PKS-NRPS hybrid synthetase cfoA that uses benzoic acid or p-hydroxybenzoic acid as a starter unit with four rounds of chain elongation using malonyl-CoA to form the chalcone skeleton. Then, a new type of chalcone isomerase, cfoK, catalyzes the conversion of the chalcone into a flavanone by a histidine-mediated oxa-Michael addition mechanism. The desaturation of flavanone to flavone is catalyzed by a new type of flavone synthase, the flavin mononucleotide (FMN)-dependent oxidoreductase cfoJ. Monooxygenases cfoF, cfoG, and P450 cfoH are responsible for the hydroxylation of the flavonoid skeleton at sites C3, C8, and C2', respectively. Like cfoF, the dehydratase cfoI also plays a role in the hydroxylation of position C3. Methyltransferases cfoB, cfoC, and cfoD then catalyze the methylation of C7-OH, C8-OH, and C3-OH, respectively. Finally, the monooxygenase cfoE is responsible for the chlorination of flavonoid at position C3'. The sequence is that of Methyltransferase cfoB from Aspergillus candidus.